Consider the following 403-residue polypeptide: 4-hydroxyphenylpyruvate dioxygenase (403 aa).

2 consecutive VOC domains span residues 25 to 169 and 201 to 359; these read GYDH…LVER and RIDH…LFTK. Fe cation is bound by residues histidine 204, histidine 287, and glutamate 370.

This sequence belongs to the 4HPPD family. Homodimer. Fe cation serves as cofactor.

The catalysed reaction is 3-(4-hydroxyphenyl)pyruvate + O2 = homogentisate + CO2. It functions in the pathway amino-acid degradation; L-phenylalanine degradation; acetoacetate and fumarate from L-phenylalanine: step 3/6. Its function is as follows. 4-hydroxyphenylpyruvate dioxygenase; part of the L-tyrosine degradation gene cluster that mediates the biosynthesis of the brownish pigment pyomelanin as an alternative melanin. The 4-hydroxyphenylpyruvate dioxygenase hppD catalyzes the conversion of 4-hydroxyphenylpyruvate to homogentisic acid (HGA). The protein hmgX is crucial for this conversion and thus, probably functions as an accessory factor to mediate specific activity of hppD. The homogentisate 1,2-dioxygenase hmgA is then involved in the cleavage of the aromatic ring of HGA and its conversion to 4-maleylacetoacetate. When hmgA activity is lowered by the cell wall integrity (CWI) signaling pathway, HGA accumulates and leads to the production of pyomelanin through benzoquinone acetic acid after oxidation and polymerization. On the opposite, in non-stress conditions, both hppD and hmgA activities are balanced and HGA is degraded into 4-maleylacetoacetate. 4-maleylacetoacetate is further converted to 4-fumarylacetoacetate by the maleylacetoacetate isomerase maiA, which is degraded into fumarate and acetoacetate by the fumarylacetoacetase fahA. The polypeptide is 4-hydroxyphenylpyruvate dioxygenase (Aspergillus fumigatus (strain ATCC MYA-4609 / CBS 101355 / FGSC A1100 / Af293) (Neosartorya fumigata)).